The chain runs to 158 residues: Large ribosomal subunit protein uL16 (158 aa).

The protein belongs to the universal ribosomal protein uL16 family. As to quaternary structure, part of the 50S ribosomal subunit.

Its function is as follows. Binds 23S rRNA and is also seen to make contacts with the A and possibly P site tRNAs. This is Large ribosomal subunit protein uL16 from Prochlorococcus marinus (strain MIT 9313).